A 208-amino-acid polypeptide reads, in one-letter code: Protein-L-isoaspartate O-methyltransferase (208 aa).

Ser59 is an active-site residue.

Belongs to the methyltransferase superfamily. L-isoaspartyl/D-aspartyl protein methyltransferase family.

It is found in the cytoplasm. It carries out the reaction [protein]-L-isoaspartate + S-adenosyl-L-methionine = [protein]-L-isoaspartate alpha-methyl ester + S-adenosyl-L-homocysteine. Catalyzes the methyl esterification of L-isoaspartyl residues in peptides and proteins that result from spontaneous decomposition of normal L-aspartyl and L-asparaginyl residues. It plays a role in the repair and/or degradation of damaged proteins. The protein is Protein-L-isoaspartate O-methyltransferase of Cronobacter sakazakii (strain ATCC BAA-894) (Enterobacter sakazakii).